Here is a 122-residue protein sequence, read N- to C-terminus: Probable glycine cleavage system H protein (122 aa).

A Lipoyl-binding domain is found at 23–104 (IATVGITDYA…PYGNWLVKMK (82 aa)). The residue at position 64 (K64) is an N6-lipoyllysine.

The protein belongs to the GcvH family. As to quaternary structure, the glycine cleavage system is composed of four proteins: P, T, L and H. (R)-lipoate serves as cofactor.

The glycine cleavage system catalyzes the degradation of glycine. The H protein shuttles the methylamine group of glycine from the P protein to the T protein. In Thermoplasma volcanium (strain ATCC 51530 / DSM 4299 / JCM 9571 / NBRC 15438 / GSS1), this protein is Probable glycine cleavage system H protein.